A 152-amino-acid polypeptide reads, in one-letter code: Cyanate hydratase (152 aa).

Catalysis depends on residues Arg-98, Glu-101, and Ser-124.

It belongs to the cyanase family.

The catalysed reaction is cyanate + hydrogencarbonate + 3 H(+) = NH4(+) + 2 CO2. Catalyzes the reaction of cyanate with bicarbonate to produce ammonia and carbon dioxide. The polypeptide is Cyanate hydratase (Uncinocarpus reesii (strain UAMH 1704)).